The sequence spans 198 residues: Transcription factor IND (198 aa).

Residues 1 to 33 (MENGMYKKKGVCDSCVSSKSRSNHSPKRSMMEP) are disordered. Residues 118 to 167 (ISDDPQTVVARRRRERISEKIRILKRIVPGGAKMDTASMLDEAIRYTKFL) form the bHLH domain.

In terms of assembly, homodimer. Heterodimer; possibly with ALC. In terms of tissue distribution, after fertilization, it is expressed in stripes about four cells wide at the margins of developing wild-type fruit. Also expressed in the inner valve layer, which becomes lignified later in fruit development. Detected in roots.

It is found in the nucleus. Its function is as follows. Transcription regulator required for seed dispersal. Involved in the differentiation of all three cell types required for fruit dehiscence. Acts as the key regulator in a network including SHP and ALC that controls specification of the valve margin. Works with ALC, SHP, and FUL to allow differentiation of the lignified valve layer, the spring-loaded mechanism of fruit that promotes opening. Regulates the expression of the YJ80 marker. This is Transcription factor IND (IND) from Arabidopsis thaliana (Mouse-ear cress).